The following is a 590-amino-acid chain: Aspartate--tRNA ligase (590 aa).

Glu-174 lines the L-aspartate pocket. Residues 198–201 (QLMK) are aspartate. L-aspartate is bound at residue Arg-220. ATP-binding positions include 220 to 222 (RDE) and Gln-229. His-443 provides a ligand contact to L-aspartate. Residue Glu-484 participates in ATP binding. Position 491 (Arg-491) interacts with L-aspartate. 536–539 (GLDR) contributes to the ATP binding site.

This sequence belongs to the class-II aminoacyl-tRNA synthetase family. Type 1 subfamily. Homodimer.

The protein localises to the cytoplasm. It catalyses the reaction tRNA(Asp) + L-aspartate + ATP = L-aspartyl-tRNA(Asp) + AMP + diphosphate. Its function is as follows. Catalyzes the attachment of L-aspartate to tRNA(Asp) in a two-step reaction: L-aspartate is first activated by ATP to form Asp-AMP and then transferred to the acceptor end of tRNA(Asp). This is Aspartate--tRNA ligase from Lactococcus lactis subsp. lactis (strain IL1403) (Streptococcus lactis).